The chain runs to 387 residues: Succinate--CoA ligase [ADP-forming] subunit beta (387 aa).

The ATP-grasp domain maps to 9–236 (RDLFESYGVP…AAAADPLEAK (228 aa)). Residues K45, 52–54 (GRG), A94, and E99 contribute to the ATP site. Mg(2+) contacts are provided by N191 and D205. Residues N256 and 318 to 320 (GIT) contribute to the substrate site.

The protein belongs to the succinate/malate CoA ligase beta subunit family. As to quaternary structure, heterotetramer of two alpha and two beta subunits. Mg(2+) serves as cofactor.

The enzyme catalyses succinate + ATP + CoA = succinyl-CoA + ADP + phosphate. It carries out the reaction GTP + succinate + CoA = succinyl-CoA + GDP + phosphate. Its pathway is carbohydrate metabolism; tricarboxylic acid cycle; succinate from succinyl-CoA (ligase route): step 1/1. Functionally, succinyl-CoA synthetase functions in the citric acid cycle (TCA), coupling the hydrolysis of succinyl-CoA to the synthesis of either ATP or GTP and thus represents the only step of substrate-level phosphorylation in the TCA. The beta subunit provides nucleotide specificity of the enzyme and binds the substrate succinate, while the binding sites for coenzyme A and phosphate are found in the alpha subunit. The polypeptide is Succinate--CoA ligase [ADP-forming] subunit beta (Clavibacter michiganensis subsp. michiganensis (strain NCPPB 382)).